Here is a 727-residue protein sequence, read N- to C-terminus: Engulfment and cell motility protein 1 (727 aa).

Tyr18 is modified (phosphotyrosine; by HCK). An N6-acetyllysine mark is found at Lys100 and Lys105. Tyr216 is subject to Phosphotyrosine; by HCK. The 174-residue stretch at 319-492 (AQRDIIFELR…VVKEQVMRAL (174 aa)) folds into the ELMO domain. Ser344 is modified (phosphoserine). Residues Tyr395 and Tyr511 each carry the phosphotyrosine; by HCK modification. One can recognise a PH domain in the interval 555–676 (RLVEGTCFRK…DGLNALLGKD (122 aa)). The SH3-binding signature appears at 707-714 (PDAPPPIP). At Tyr720 the chain carries Phosphotyrosine; by HCK.

As to quaternary structure, interacts directly with the SH3-domain of DOCK1 via its SH3-binding site. Probably forms a heterotrimeric complex with DOCK1 and RAC1. Interacts with PLEKHG6. Interacts with HCK (via SH3 domain). Interacts with ADGRB1. Interacts with ADGRB3. Interacts with DOCK5. Phosphorylated by HCK.

It localises to the cytoplasm. It is found in the cell membrane. Involved in cytoskeletal rearrangements required for phagocytosis of apoptotic cells and cell motility. Acts in association with DOCK1 and CRK. Was initially proposed to be required in complex with DOCK1 to activate Rac Rho small GTPases. May enhance the guanine nucleotide exchange factor (GEF) activity of DOCK1. This is Engulfment and cell motility protein 1 (Elmo1) from Mus musculus (Mouse).